Reading from the N-terminus, the 384-residue chain is Chaperone protein DnaJ (384 aa).

In terms of domain architecture, J spans 5 to 70; sequence DYYEVLGVSK…DKKAAYDRYG (66 aa). The disordered stretch occupies residues 16–47; that stretch reads ASSDDIKKGYRRKAKELHPDRNKDDPNAEAQF. Positions 31–47 are enriched in basic and acidic residues; sequence ELHPDRNKDDPNAEAQF. Residues 143–221 form a CR-type zinc finger; sequence GLQKTINVPT…CQGAGRVEKD (79 aa). The Zn(2+) site is built by C156, C159, C173, C176, C195, C198, C209, and C212. CXXCXGXG motif repeat units follow at residues 156–163, 173–180, 195–202, and 209–216; these read CKTCNGSG, CPTCSGMG, CPTCSGLG, and CKSCQGAG.

This sequence belongs to the DnaJ family. As to quaternary structure, homodimer. Requires Zn(2+) as cofactor.

It is found in the cytoplasm. Participates actively in the response to hyperosmotic and heat shock by preventing the aggregation of stress-denatured proteins and by disaggregating proteins, also in an autonomous, DnaK-independent fashion. Unfolded proteins bind initially to DnaJ; upon interaction with the DnaJ-bound protein, DnaK hydrolyzes its bound ATP, resulting in the formation of a stable complex. GrpE releases ADP from DnaK; ATP binding to DnaK triggers the release of the substrate protein, thus completing the reaction cycle. Several rounds of ATP-dependent interactions between DnaJ, DnaK and GrpE are required for fully efficient folding. Also involved, together with DnaK and GrpE, in the DNA replication of plasmids through activation of initiation proteins. This is Chaperone protein DnaJ from Roseobacter denitrificans (strain ATCC 33942 / OCh 114) (Erythrobacter sp. (strain OCh 114)).